Reading from the N-terminus, the 340-residue chain is Ferrochelatase (340 aa).

Residues H202 and E283 each coordinate Fe cation.

The protein belongs to the ferrochelatase family.

It is found in the cytoplasm. It carries out the reaction heme b + 2 H(+) = protoporphyrin IX + Fe(2+). It functions in the pathway porphyrin-containing compound metabolism; protoheme biosynthesis; protoheme from protoporphyrin-IX: step 1/1. Functionally, catalyzes the ferrous insertion into protoporphyrin IX. This Acinetobacter baylyi (strain ATCC 33305 / BD413 / ADP1) protein is Ferrochelatase.